Reading from the N-terminus, the 870-residue chain is Dynamin-2 (870 aa).

Residues 28-294 (HLDLPQIAVV…LTNHIRESLP (267 aa)) form the Dynamin-type G domain. Residues 38-45 (GGQSAGKS) are G1 motif. GDP-binding residues include Ser41, Gly43, Lys44, Ser45, Ser46, Arg59, and Gly60. The tract at residues 64-66 (VTR) is G2 motif. The G3 motif stretch occupies residues 136–139 (DLPG). The interval 205 to 208 (TKLD) is G4 motif. Residues Lys206, Asp208, and Asp211 each contribute to the GDP site. At Tyr231 the chain carries Phosphotyrosine. A G5 motif region spans residues 235–238 (VNRS). GDP-binding residues include Asn236, Arg237, and Gln239. Residue Lys299 is modified to N6-acetyllysine. The 107-residue stretch at 519 to 625 (LVIRRGWLTI…WKASFLRAGV (107 aa)) folds into the PH domain. The residue at position 597 (Tyr597) is a Phosphotyrosine. N6-acetyllysine is present on Lys598. The GED domain maps to 653-744 (VETIRNLVDS…IIGDISTSTV (92 aa)). The segment at 741-870 (TSTVSTPVPP…IRPAEPSLLD (130 aa)) is disordered. A Phosphothreonine modification is found at Thr755. A compositionally biased stretch (polar residues) spans 756–767 (WLQNTSSHSPTP). Ser764 is subject to Phosphoserine; by CDK1. The span at 826 to 846 (SAPPQIPSRPARIPPGIPPGV) shows a compositional bias: pro residues. Residues 847–864 (PSRRAPAAPSRPTIIRPA) show a composition bias toward low complexity.

It belongs to the TRAFAC class dynamin-like GTPase superfamily. Dynamin/Fzo/YdjA family. Oligomerizes into a helical polymer that self-assembles around the vesicle membrane, when associated to the menbrane through lipid binding. Interacts with SHANK1 and SHANK2. Interacts with SNX9. Interacts (via C-terminal proline-rich domain (PRD)) with SNX18 (via SH3 domain); this interaction regulates ATG9A and ATG16L1 trafficking from recycling endosomes to sites of autophagosome formation. Interacts with SNX33 (via SH3 domain). Interacts with PSTPIP1 (via SH3 domain). Interacts with CTNND2. Interacts (via C-terminal proline-rich domain (PRD)) with BIN1 (via SH3 domain); this interaction allows the recruitment of DNM2 to the membrane tubules and inhibits self-assembly-stimulated GTPase activity on the membrane. Interacts with GABARAP, GABARAPL1 and GABARAPL2. Interacts with MAP1LC3B (the lipidate and non-lipidated LC3 form); this interaction mediates recycling endosome scission leading to autophagosome release. Interacts with ITSN1. Interacts with MYOF. May interact with PIK3C3. May be a component of a complex composed of RAB5A (in GDP-bound form), DYN2 and PIK3C3. Interacts with SDC4; this interaction is markedly enhanced at focal ahesion site upon induction of focal adhesions and stress-fiber formation. Interacts with ACTN1. Interacts with CTTN; this interaction stimulates the intrinsic GTPase activity of DNM2 and stabilizes the association of DNM2 and actin filaments; in addition this interaction is stimulated by ligand binding to the receptor, leading to the recruitment of the DNM2-CTTN complex to the sequestered receptor-ligand complex to its internalization. Interacts with NOSTRIN (via SH3 domain); this interaction allows the recruitment of NOS3 to dynamin-positive structures. Interacts (via C-terminal proline-rich domain (PRD)) with SH3BP4 (via SH3 domain); this interaction controls the GTPase activity and is prevented by EGFR-induced tyrosine phosphorylation of either DNM2 or SH3BP4. Interacts with MYO1E (via SH3 domain). Interacts with TUBG1; this interaction may participate in centrosome cohesion. Phosphorylation at Ser-848 by GSK3-alpha relieves the inhibition of BIN1 and promotes endocytosis. Phosphorylation at Ser-764 by CDK1 is greatly increased upon mitotic entry. It regulates cytokinesis downstream of calcineurin, and does not affect clathrin-mediated endocytosis. Dephosphorylated by calcineurin/PP2 during cytokinesis in a Ca(2+)- and calmodulin-dependent manner. Phosphorylated on tyrosine residues by EGFR. Phosphorylated on tyrosine residues after activation of SRC. Ubiquitously expressed. Brain expression is restricted to glial cells and fibroblasts. Highest levels in the testis.

Its subcellular location is the cytoplasm. The protein resides in the cytoskeleton. The protein localises to the cytoplasmic vesicle. It is found in the clathrin-coated vesicle. It localises to the cell projection. Its subcellular location is the uropodium. The protein resides in the endosome. The protein localises to the microtubule organizing center. It is found in the centrosome. It localises to the centriole. Its subcellular location is the recycling endosome. The protein resides in the phagocytic cup. The protein localises to the phagosome membrane. It is found in the podosome. It localises to the cell junction. Its subcellular location is the postsynaptic density. The protein resides in the synapse. The protein localises to the synaptosome. It is found in the midbody. It localises to the membrane. Its subcellular location is the clathrin-coated pit. The protein resides in the cell membrane. The enzyme catalyses GTP + H2O = GDP + phosphate + H(+). Functionally, catalyzes the hydrolysis of GTP and utilizes this energy to mediate vesicle scission at plasma membrane during endocytosis and filament remodeling at many actin structures during organization of the actin cytoskeleton. Plays an important role in vesicular trafficking processes, namely clathrin-mediated endocytosis (CME), exocytic and clathrin-coated vesicle from the trans-Golgi network, and PDGF stimulated macropinocytosis. During vesicular trafficking process, associates to the membrane, through lipid binding, and self-assembles into ring-like structure through oligomerization to form a helical polymer around the vesicle membrane and leading to vesicle scission. Plays a role in organization of the actin cytoskeleton by mediating arrangement of stress fibers and actin bundles in podocytes. During organization of the actin cytoskeleton, self-assembles into ring-like structure that directly bundles actin filaments to form typical membrane tubules decorated with dynamin spiral polymers. Self-assembly increases GTPase activity and the GTP hydrolysis causes the rapid depolymerization of dynamin spiral polymers, and results in dispersion of actin bundles. Remodels, through its interaction with CTTN, bundled actin filaments in a GTPase-dependent manner and plays a role in orchestrating the global actomyosin cytoskeleton. The interaction with CTTN stabilizes the interaction of DNM2 and actin filaments and stimulates the intrinsic GTPase activity that results in actin filament-barbed ends and increases the sensitivity of filaments in bundles to the actin depolymerizing factor, CFL1. Plays a role in the autophagy process, by participating in the formation of ATG9A vesicles destined for the autophagosomes through its interaction with SNX18, by mediating recycling endosome scission leading to autophagosome release through MAP1LC3B interaction and by regulating maturation of apoptotic cell corpse-containing phagosomes by recruiting PIK3C3 to the phagosome membrane. Also plays a role in cytokinesis. May participate in centrosome cohesion through its interaction with TUBG1. Plays a role in the regulation of neuron morphology, axon growth and formation of neuronal growth cones. Involved in membrane tubulation. The polypeptide is Dynamin-2 (Rattus norvegicus (Rat)).